A 152-amino-acid polypeptide reads, in one-letter code: Transcriptional regulator MraZ (152 aa).

SpoVT-AbrB domains lie at 5 to 52 and 81 to 124; these read ATMV…PLPE and ASEC…DEQT.

The protein belongs to the MraZ family. In terms of assembly, forms oligomers.

Its subcellular location is the cytoplasm. The protein localises to the nucleoid. In terms of biological role, negatively regulates its own expression and that of the subsequent genes in the proximal part of the division and cell wall (dcw) gene cluster. Acts by binding directly to DNA. May also regulate the expression of genes outside the dcw cluster. This chain is Transcriptional regulator MraZ, found in Serratia proteamaculans (strain 568).